Consider the following 393-residue polypeptide: Methylthioribose kinase (393 aa).

Residues asparagine 38, lysine 53, and 107 to 109 each bind ATP; that span reads EDL. Residue aspartate 225 participates in substrate binding. 242–244 serves as a coordination point for ATP; that stretch reads DPE. Arginine 332 contributes to the substrate binding site.

The protein belongs to the methylthioribose kinase family. Homodimer.

The catalysed reaction is 5-(methylsulfanyl)-D-ribose + ATP = 5-(methylsulfanyl)-alpha-D-ribose 1-phosphate + ADP + H(+). It participates in amino-acid biosynthesis; L-methionine biosynthesis via salvage pathway; S-methyl-5-thio-alpha-D-ribose 1-phosphate from S-methyl-5'-thioadenosine (hydrolase route): step 2/2. Catalyzes the phosphorylation of methylthioribose into methylthioribose-1-phosphate. This chain is Methylthioribose kinase, found in Bacillus cereus (strain G9842).